The sequence spans 374 residues: Peptide chain release factor 2 (374 aa).

Q254 carries the post-translational modification N5-methylglutamine.

It belongs to the prokaryotic/mitochondrial release factor family. In terms of processing, methylated by PrmC. Methylation increases the termination efficiency of RF2.

It localises to the cytoplasm. Its function is as follows. Peptide chain release factor 2 directs the termination of translation in response to the peptide chain termination codons UGA and UAA. The protein is Peptide chain release factor 2 of Renibacterium salmoninarum (strain ATCC 33209 / DSM 20767 / JCM 11484 / NBRC 15589 / NCIMB 2235).